We begin with the raw amino-acid sequence, 320 residues long: Ferrochelatase (320 aa).

Positions 194 and 275 each coordinate Fe cation.

It belongs to the ferrochelatase family. Monomer.

It is found in the cytoplasm. It catalyses the reaction heme b + 2 H(+) = protoporphyrin IX + Fe(2+). Its pathway is porphyrin-containing compound metabolism; protoheme biosynthesis; protoheme from protoporphyrin-IX: step 1/1. Functionally, catalyzes the ferrous insertion into protoporphyrin IX. The sequence is that of Ferrochelatase from Salmonella agona (strain SL483).